Consider the following 3582-residue polypeptide: Ubiquitin carboxyl-terminal hydrolase 34 (3582 aa).

Serine 352, serine 486, serine 487, and serine 490 each carry phosphoserine. Disordered regions lie at residues 503–533 (EEEE…HQSG), 551–670 (QQRL…ELRN), 682–705 (GESQ…VFNT), 775–801 (HHHH…DGHM), and 1496–1515 (TGSY…DQVE). The segment covering 510 to 524 (AAPSPWSPAASPQSS) has biased composition (low complexity). Residues 560 to 570 (SMQGSSDETAN) are compositionally biased toward polar residues. The span at 571 to 590 (SGEDGSSGPGSSSGHSDGSS) shows a compositional bias: low complexity. The span at 591–609 (NEVNSSHASQSAGSPGSEV) shows a compositional bias: polar residues. Positions 610–653 (QSEDIADIEALKEEEEEEEEEEEEEEEEDDEEEEDEEEDDDDDD) are enriched in acidic residues. Polar residues predominate over residues 684-697 (SQGTSERNGTNSGT). The span at 775–798 (HHHHHHHHHHHHHHHHHHHHHHHD) shows a compositional bias: basic residues. A compositionally biased stretch (acidic residues) spans 1504 to 1514 (PDSDDSSEDQV). Serine 1506 bears the Phosphoserine mark. In terms of domain architecture, USP spans 1931-2276 (VGLTNLGATC…SAYMLFYKRM (346 aa)). Catalysis depends on cysteine 1940, which acts as the Nucleophile. The active-site Proton acceptor is the histidine 2201. Residue serine 2525 is modified to Phosphoserine. The segment at 3369–3484 (SLQEQEAKER…QSNNGRFDDC (116 aa)) is disordered. The span at 3373–3384 (QEAKERKTKDDE) shows a compositional bias: basic and acidic residues. Phosphoserine occurs at positions 3395 and 3396. Threonine 3418 is subject to Phosphothreonine. A phosphoserine mark is found at serine 3423 and serine 3443. Residues 3463–3484 (DGSHIRSQHAEEQSNNGRFDDC) are compositionally biased toward basic and acidic residues. Serine 3539 carries the post-translational modification Phosphoserine.

Belongs to the peptidase C19 family. As to quaternary structure, interacts with AXIN1 and AXIN2.

The catalysed reaction is Thiol-dependent hydrolysis of ester, thioester, amide, peptide and isopeptide bonds formed by the C-terminal Gly of ubiquitin (a 76-residue protein attached to proteins as an intracellular targeting signal).. Functionally, ubiquitin hydrolase that can remove conjugated ubiquitin from AXIN1 and AXIN2, thereby acting as a regulator of Wnt signaling pathway. Acts as an activator of the Wnt signaling pathway downstream of the beta-catenin destruction complex by deubiquitinating and stabilizing AXIN1 and AXIN2, leading to promote nuclear accumulation of AXIN1 and AXIN2 and positively regulate beta-catenin (CTNBB1)-mediated transcription. Recognizes and hydrolyzes the peptide bond at the C-terminal Gly of ubiquitin. Involved in the processing of poly-ubiquitin precursors as well as that of ubiquitinated proteins. The protein is Ubiquitin carboxyl-terminal hydrolase 34 (Usp34) of Mus musculus (Mouse).